Here is a 415-residue protein sequence, read N- to C-terminus: DNA polymerase IV 2 (415 aa).

One can recognise a UmuC domain in the interval 7 to 183 (ILHADLDAFY…LPVSLMWGVG (177 aa)). The Mg(2+) site is built by Asp-11 and Asp-101. The active site involves Glu-102.

Belongs to the DNA polymerase type-Y family. In terms of assembly, monomer. Mg(2+) is required as a cofactor.

The protein localises to the cytoplasm. It carries out the reaction DNA(n) + a 2'-deoxyribonucleoside 5'-triphosphate = DNA(n+1) + diphosphate. Functionally, poorly processive, error-prone DNA polymerase involved in untargeted mutagenesis. Copies undamaged DNA at stalled replication forks, which arise in vivo from mismatched or misaligned primer ends. These misaligned primers can be extended by PolIV. Exhibits no 3'-5' exonuclease (proofreading) activity. May be involved in translesional synthesis, in conjunction with the beta clamp from PolIII. This is DNA polymerase IV 2 (dinB2) from Mesorhizobium japonicum (strain LMG 29417 / CECT 9101 / MAFF 303099) (Mesorhizobium loti (strain MAFF 303099)).